Reading from the N-terminus, the 422-residue chain is Nuclear hormone receptor family member nhr-54 (422 aa).

The segment at residues 14-92 (SVKCAICYKA…LGMTTENVRT (79 aa)) is a DNA-binding region (nuclear receptor). NR C4-type zinc fingers lie at residues 17–37 (CAICYKAGHGQHFGVETCRAC) and 53–80 (CTRKSGKCKIGSDETKDVMCKFCRFKKC). Residues 161–422 (PDDDVIVELN…VFTEPEFFRV (262 aa)) enclose the NR LBD domain.

The protein belongs to the nuclear hormone receptor family.

It localises to the nucleus. Functionally, orphan nuclear receptor. The polypeptide is Nuclear hormone receptor family member nhr-54 (nhr-54) (Caenorhabditis elegans).